The primary structure comprises 367 residues: uncharacterized protein (367 aa).

Its subcellular location is the mitochondrion. This is an uncharacterized protein from Paramecium tetraurelia.